A 702-amino-acid polypeptide reads, in one-letter code: Phosphoribosylformylglycinamidine synthase subunit PurL (702 aa).

His-36 is a catalytic residue. Residues Tyr-39 and Lys-80 each coordinate ATP. Residue Glu-82 participates in Mg(2+) binding. Residues 83–86 and Arg-105 contribute to the substrate site; that span reads SHNH. His-84 (proton acceptor) is an active-site residue. Asp-106 provides a ligand contact to Mg(2+). Substrate is bound at residue Gln-225. Residue Asp-251 participates in Mg(2+) binding. Position 293-295 (293-295) interacts with substrate; that stretch reads ETQ. ATP is bound by residues Asp-468 and Gly-505. Ser-508 is a binding site for substrate.

It belongs to the FGAMS family. Monomer. Part of the FGAM synthase complex composed of 1 PurL, 1 PurQ and 2 PurS subunits.

Its subcellular location is the cytoplasm. The enzyme catalyses N(2)-formyl-N(1)-(5-phospho-beta-D-ribosyl)glycinamide + L-glutamine + ATP + H2O = 2-formamido-N(1)-(5-O-phospho-beta-D-ribosyl)acetamidine + L-glutamate + ADP + phosphate + H(+). Its pathway is purine metabolism; IMP biosynthesis via de novo pathway; 5-amino-1-(5-phospho-D-ribosyl)imidazole from N(2)-formyl-N(1)-(5-phospho-D-ribosyl)glycinamide: step 1/2. Functionally, part of the phosphoribosylformylglycinamidine synthase complex involved in the purines biosynthetic pathway. Catalyzes the ATP-dependent conversion of formylglycinamide ribonucleotide (FGAR) and glutamine to yield formylglycinamidine ribonucleotide (FGAM) and glutamate. The FGAM synthase complex is composed of three subunits. PurQ produces an ammonia molecule by converting glutamine to glutamate. PurL transfers the ammonia molecule to FGAR to form FGAM in an ATP-dependent manner. PurS interacts with PurQ and PurL and is thought to assist in the transfer of the ammonia molecule from PurQ to PurL. The polypeptide is Phosphoribosylformylglycinamidine synthase subunit PurL (Metallosphaera sedula (strain ATCC 51363 / DSM 5348 / JCM 9185 / NBRC 15509 / TH2)).